The sequence spans 842 residues: Putative G-type lectin S-receptor-like serine/threonine-protein kinase At1g61610 (842 aa).

The N-terminal stretch at Met-1–Ser-22 is a signal peptide. Residues Asn-7, Asn-23, Asn-35, Asn-60, Asn-110, Asn-123, Asn-304, Asn-351, and Asn-380 are each glycosylated (N-linked (GlcNAc...) asparagine). Topologically, residues Asn-23 to Thr-443 are extracellular. The 122-residue stretch at Ser-29–Ser-150 folds into the Bulb-type lectin domain. An EGF-like domain is found at Pro-292–Asp-331. 2 disulfides stabilise this stretch: Cys-296/Cys-308 and Cys-302/Cys-319. The PAN domain maps to Cys-350 to Ala-431. Cystine bridges form between Cys-385/Cys-406 and Cys-389/Cys-395. A glycan (N-linked (GlcNAc...) asparagine) is linked at Asn-441. A helical membrane pass occupies residues Leu-444 to Leu-464. Residues Trp-465–Arg-842 are Cytoplasmic-facing. The 290-residue stretch at Phe-525–Leu-814 folds into the Protein kinase domain. ATP contacts are provided by residues Leu-531 to Val-539 and Lys-553. Residue Ser-559 is modified to Phosphoserine. The segment at Ser-614–Ile-631 is caM-binding. The active-site Proton acceptor is Asp-650. 2 positions are modified to phosphoserine: Ser-654 and Ser-667. At Thr-684 the chain carries Phosphothreonine. Ser-728 and Ser-830 each carry phosphoserine. Phosphothreonine is present on Thr-837.

Belongs to the protein kinase superfamily. Ser/Thr protein kinase family.

It localises to the cell membrane. It catalyses the reaction L-seryl-[protein] + ATP = O-phospho-L-seryl-[protein] + ADP + H(+). It carries out the reaction L-threonyl-[protein] + ATP = O-phospho-L-threonyl-[protein] + ADP + H(+). This is Putative G-type lectin S-receptor-like serine/threonine-protein kinase At1g61610 from Arabidopsis thaliana (Mouse-ear cress).